The chain runs to 214 residues: Pyridoxine/pyridoxamine 5'-phosphate oxidase (214 aa).

Residues 9–12 (RKSY) and lysine 67 each bind substrate. Residues 62-67 (RIVLLK), 77-78 (YT), arginine 83, lysine 84, and glutamine 106 contribute to the FMN site. The substrate site is built by tyrosine 124, arginine 128, and serine 132. Residues 141 to 142 (QS) and tryptophan 186 each bind FMN. A substrate-binding site is contributed by 192–194 (RLH). Arginine 196 lines the FMN pocket.

It belongs to the pyridoxamine 5'-phosphate oxidase family. Homodimer. Requires FMN as cofactor.

The catalysed reaction is pyridoxamine 5'-phosphate + O2 + H2O = pyridoxal 5'-phosphate + H2O2 + NH4(+). It catalyses the reaction pyridoxine 5'-phosphate + O2 = pyridoxal 5'-phosphate + H2O2. It participates in cofactor metabolism; pyridoxal 5'-phosphate salvage; pyridoxal 5'-phosphate from pyridoxamine 5'-phosphate: step 1/1. It functions in the pathway cofactor metabolism; pyridoxal 5'-phosphate salvage; pyridoxal 5'-phosphate from pyridoxine 5'-phosphate: step 1/1. Its function is as follows. Catalyzes the oxidation of either pyridoxine 5'-phosphate (PNP) or pyridoxamine 5'-phosphate (PMP) into pyridoxal 5'-phosphate (PLP). This chain is Pyridoxine/pyridoxamine 5'-phosphate oxidase, found in Leptospira interrogans serogroup Icterohaemorrhagiae serovar copenhageni (strain Fiocruz L1-130).